The following is a 208-amino-acid chain: Guanylate kinase (208 aa).

A Guanylate kinase-like domain is found at 4 to 185 (GNLYILSAPS…TLKDLQSILQ (182 aa)). 11–18 (APSGAGKS) provides a ligand contact to ATP.

Belongs to the guanylate kinase family.

It localises to the cytoplasm. The catalysed reaction is GMP + ATP = GDP + ADP. In terms of biological role, essential for recycling GMP and indirectly, cGMP. The polypeptide is Guanylate kinase (Haemophilus influenzae (strain 86-028NP)).